We begin with the raw amino-acid sequence, 41 residues long: Tachystatin-C (41 aa).

Disulfide bonds link C12-C28, C19-C33, and C27-C38.

As to expression, granular hemocytes, small secretory granules.

Its subcellular location is the secreted. Functionally, binds to chitin. Shows strong activity against E.coli (IC(50) is 1.2 ug/ml). Is also very active against S.aureus (IC(50) is 0.8 ug/ml), C.albicans (IC(50) is 0.9 ug/ml) and P.pastoris (IC(50) is 0.3 ug/ml). Binds to chitin (5.2 uM are required to obtain 50% of binding). Causes hemolysis on sheep erythrocytes, probably by forming ion-permeable pores. This Tachypleus tridentatus (Japanese horseshoe crab) protein is Tachystatin-C.